The sequence spans 192 residues: Phosphoheptose isomerase (192 aa).

In terms of domain architecture, SIS spans 37–192 (ITDSFKNGGK…MMLIEFEMAK (156 aa)). Substrate is bound at residue 52 to 54 (NGG). Residues histidine 61 and glutamate 65 each contribute to the Zn(2+) site. Substrate contacts are provided by residues glutamate 65, 93 to 94 (ND), 119 to 121 (STS), serine 124, and glutamine 172. Positions 172 and 180 each coordinate Zn(2+).

This sequence belongs to the SIS family. GmhA subfamily. As to quaternary structure, homotetramer. It depends on Zn(2+) as a cofactor.

It localises to the cytoplasm. The catalysed reaction is 2 D-sedoheptulose 7-phosphate = D-glycero-alpha-D-manno-heptose 7-phosphate + D-glycero-beta-D-manno-heptose 7-phosphate. Its pathway is carbohydrate biosynthesis; D-glycero-D-manno-heptose 7-phosphate biosynthesis; D-glycero-alpha-D-manno-heptose 7-phosphate and D-glycero-beta-D-manno-heptose 7-phosphate from sedoheptulose 7-phosphate: step 1/1. Catalyzes the isomerization of sedoheptulose 7-phosphate in D-glycero-D-manno-heptose 7-phosphate. In Glaesserella parasuis serovar 5 (strain SH0165) (Haemophilus parasuis), this protein is Phosphoheptose isomerase.